Reading from the N-terminus, the 1811-residue chain is Proteasome activator subunit 4 (1811 aa).

6 HEAT repeats span residues 563-599 (PYYY…ILPG), 1156-1193 (KILD…ESPH), 1442-1479 (KLHI…NIRL), 1613-1650 (SHLQ…RHTF), 1655-1692 (EDKQ…GGDE), and 1746-1783 (PSWL…THAD). Positions 1626-1711 (ADDSNWRIRS…SYAEANSIQK (86 aa)) are bromodomain-like (BRDL).

Belongs to the BLM10 family. Interacts with the 26S proteasomes.

Functionally, associated component of the proteasome that specifically recognizes acetylated histones and promotes ATP- and ubiquitin-independent degradation of core histones during DNA damage response. Recognizes and binds acetylated histones via its bromodomain-like (BRDL) region and activates the proteasome by opening the gated channel for substrate entry. Binds to the core proteasome via its C-terminus, which occupies the same binding sites as the proteasomal ATPases, opening the closed structure of the proteasome via an active gating mechanism. involved in DNA damage response: binds to acetylated histones and promotes degradation of histones. This chain is Proteasome activator subunit 4 (PA200), found in Arabidopsis thaliana (Mouse-ear cress).